The primary structure comprises 1387 residues: Kinesin-like protein KIF15-B (1387 aa).

A Kinesin motor domain is found at 26-364; the sequence is AIKVFVRIRP…LQFAQRAKLI (339 aa). 110–117 lines the ATP pocket; the sequence is GQTGSGKT. Positions 369 to 1383 form a coiled coil; sequence VVNEDTQGNV…NLFLKETKKC (1015 aa). The tract at residues 1138-1387 is necessary for its targeting to microtubule minus ends; that stretch reads NSPVVLAQTP…KETKKCEHCD (250 aa).

This sequence belongs to the TRAFAC class myosin-kinesin ATPase superfamily. Kinesin family. KLP2 subfamily. Homodimer. Dimerization is required for targeting to microtubule minus ends. Found in a complex with tpx2 and microtubules. Its association with microtubules and targeting to microtubule minus ends requires tpx2. Strongly expressed in testis and weakly in lung (at protein level).

It localises to the cytoplasm. It is found in the cytoskeleton. The protein localises to the microtubule organizing center. Its subcellular location is the centrosome. The protein resides in the spindle. It localises to the spindle pole. In terms of biological role, plus-end directed kinesin-like motor enzyme involved in mitotic spindle assembly. Required for centrosome separation and maintenance of spindle bipolarity during mitosis. The polypeptide is Kinesin-like protein KIF15-B (kif15-b) (Xenopus laevis (African clawed frog)).